Reading from the N-terminus, the 381-residue chain is Opsin Rh2 (381 aa).

Topologically, residues 1 to 56 (MERSHLPETPFDLAHSGPRFQAQSSGNGSVLDNVLPDMAHLVNPYWSRFAPMDPMM) are extracellular. Asn27 carries an N-linked (GlcNAc...) asparagine glycan. The helical transmembrane segment at 57-81 (SKILGLFTLAIMIISCCGNGVVVYI) threads the bilayer. At 82-93 (FGGTKSLRTPAN) the chain is on the cytoplasmic side. Residues 94-119 (LLVLNLAFSDFCMMASQSPVMIINFY) form a helical membrane-spanning segment. Topologically, residues 120-133 (YETWVLGPLWCDIY) are extracellular. Cys130 and Cys207 are joined by a disulfide. A helical transmembrane segment spans residues 134–153 (AGCGSLFGCVSIWSMCMIAF). The Cytoplasmic segment spans residues 154 to 172 (DRYNVIVKGINGTPMTIKT). A helical transmembrane segment spans residues 173 to 196 (SIMKILFIWMMAVFWTVMPLIGWS). Residues 197-220 (AYVPEGNLTACSIDYMTRMWNPRS) are Extracellular-facing. Residues 221–248 (YLITYSLFVYYTPLFLICYSYWFIIAAV) traverse the membrane as a helical segment. Topologically, residues 249–283 (AAHEKAMREQAKKMNVKSLRSSEDCDKSAEGKLAK) are cytoplasmic. The chain crosses the membrane as a helical span at residues 284–307 (VALTTISLWFMAWTPYLVICYFGL). At 308–314 (FKIDGLT) the chain is on the extracellular side. The helical transmembrane segment at 315–339 (PLTTIWGATFAKTSAVYNPIVYGIS) threads the bilayer. Lys326 carries the N6-(retinylidene)lysine modification. The Cytoplasmic portion of the chain corresponds to 340-381 (HPKYRIVLKEKCPMCVFGNTDEPKPDAPASDTETTSEADSKA). The tract at residues 359–381 (TDEPKPDAPASDTETTSEADSKA) is disordered. Positions 370-381 (DTETTSEADSKA) are enriched in polar residues.

It belongs to the G-protein coupled receptor 1 family. Opsin subfamily. In terms of processing, phosphorylated on some or all of the serine and threonine residues present in the C-terminal region. As to expression, predominant opsin expressed in the dorsal ocelli.

Its subcellular location is the membrane. Visual pigments are the light-absorbing molecules that mediate vision. They consist of an apoprotein, opsin, covalently linked to cis-retinal. This is Opsin Rh2 (Rh2) from Drosophila melanogaster (Fruit fly).